Here is a 200-residue protein sequence, read N- to C-terminus: Gamma-glutamyl-CDP-amidate hydrolase (200 aa).

The 181-residue stretch at 20 to 200 (ECLALDWGKL…LKEWFSLIKE (181 aa)) folds into the Glutamine amidotransferase type-1 domain. Cys-101 functions as the Nucleophile in the catalytic mechanism. Catalysis depends on residues His-178 and Glu-180.

The enzyme catalyses N(5)-(cytidine 5'-diphosphoramidyl)-L-glutamine + H2O = cytidine 5'-diphosphoramidate + L-glutamate + H(+). The protein operates within capsule biogenesis; capsule polysaccharide biosynthesis. Its function is as follows. Involved in the biosynthesis of the O-methyl phosphoramidate (MeOPN) group found on the capsular polysaccharide (CPS) of C.jejuni. Catalyzes the hydrolysis of CDP-L-glutamine to L-glutamate and cytidine diphosphoramidate. This is Gamma-glutamyl-CDP-amidate hydrolase from Campylobacter jejuni subsp. jejuni serotype O:2 (strain ATCC 700819 / NCTC 11168).